The primary structure comprises 325 residues: MNALTAVQNNAVDSGQDYSGFTLIPSAQSPRLLELTFTEQTTNRFLEQVAEWPVQALEYKSFLRFRVGKILDDLCANQLQPLLLKTLLNRAEGALLINAVGIDDVAQADEMVKLATAVAHLIGRSNFDAMSGQYYARFVVKNVDNSDSYLRQPHRVMELHNDGTYVEEITDYVLMMKIDEQNMQGGNSLLLHLDDWEHLDHFFRHPLARRPMRFAAPPSKNVSKDVFHPVFDVDQQGRPVMRYIDQFVQPKDFEEGVWLSELSDAIETSKGILSVPVPVGKFLLINNLFWLHGRDRFTPHPDLRRELMRQRGYFAYATHHYQTHQ.

3 residues coordinate Fe cation: H160, D162, and H292.

This sequence belongs to the glutarate hydroxylase family. As to quaternary structure, homotetramer. Fe(2+) is required as a cofactor.

It carries out the reaction glutarate + 2-oxoglutarate + O2 = (S)-2-hydroxyglutarate + succinate + CO2. It functions in the pathway amino-acid degradation. In terms of biological role, acts as an alpha-ketoglutarate-dependent dioxygenase catalyzing hydroxylation of glutarate (GA) to L-2-hydroxyglutarate (L2HG). Functions in a L-lysine degradation pathway that proceeds via cadaverine, glutarate and L-2-hydroxyglutarate. The sequence is that of Glutarate 2-hydroxylase from Escherichia coli (strain UTI89 / UPEC).